We begin with the raw amino-acid sequence, 267 residues long: MAPSKWDDEEDSSSPPPPPVVARRKFDDEEEEDVLDSWDAAEDSEVEREKAAKAAAAAAKAEAEAAAKKKSKAQRIEEHKQERKKQAEANESDEDSDEDEAARRARLRRTEKEGDLKHAQDLFDDIDLNRNRGAPKAIVISDSADPTQAVDLSAMPLFKPTTKDQFTRLTTTLIPLLTAHSKKPHYALWAQEFTKQLVKELNSGDVKKIASALTTISNEKMREERAADKGNKKTKAAKTKVSLVASRDNKIDATPYDDDGLDDDDFM.

2 disordered regions span residues 1-128 and 220-241; these read MAPS…DIDL and KMREERAADKGNKKTKAAKTKV. The segment covering 28–46 has biased composition (acidic residues); it reads DEEEEDVLDSWDAAEDSEV. A coiled-coil region spans residues 44-96; the sequence is SEVEREKAAKAAAAAAKAEAEAAAKKKSKAQRIEEHKQERKKQAEANESDEDS. Residues 74–88 show a composition bias toward basic and acidic residues; sequence QRIEEHKQERKKQAE. Residues 90 to 100 show a composition bias toward acidic residues; it reads NESDEDSDEDE. Basic and acidic residues-rich tracts occupy residues 108 to 121 and 220 to 231; these read RRTEKEGDLKHAQD and KMREERAADKGN.

Belongs to the eIF-3 subunit J family. In terms of assembly, component of the eukaryotic translation initiation factor 3 (eIF-3) complex.

The protein resides in the cytoplasm. Component of the eukaryotic translation initiation factor 3 (eIF-3) complex, which is involved in protein synthesis of a specialized repertoire of mRNAs and, together with other initiation factors, stimulates binding of mRNA and methionyl-tRNAi to the 40S ribosome. The eIF-3 complex specifically targets and initiates translation of a subset of mRNAs involved in cell proliferation. In Neosartorya fischeri (strain ATCC 1020 / DSM 3700 / CBS 544.65 / FGSC A1164 / JCM 1740 / NRRL 181 / WB 181) (Aspergillus fischerianus), this protein is Eukaryotic translation initiation factor 3 subunit J (hcr1).